Consider the following 435-residue polypeptide: MDYKNDINSDDDFDCSNGYSDSYGSNGRMSNPNGLSKAELRKTNKPIMEKRRRARINHCLNELKSLILEAMKKDPARHTKLEKADILEMTVKHLQSVQRQQLNMAIQSDPSVVQKFKTGFVECAEEVNRYVSQMDGIDTGVRQRLSAHLNQCANSLEQIGSMSNFSNGYRGGLFPATAVTAAPTPLFPSLPQDLNNNSRTESSAPAIQMGGLQLIPSRLPSGEFALIMPNTGSAAPPPGPFAWPGSAAGVAAGTASAALASIANPTHLNDYTQSFRMSAFSKPVNTSVPANLPENLIHTLPGQTQLPVKNSTSPPLSPISSISSHCEESRAASPTVDVMSKHSFAGVFSTPPPTSAETSFNTSGSLNLSAGSHDSSGCSRPLAHLQQQQVSSTSGIAKRDREAEAESSDCSLDEPSSKKFLAGAIEKSSSAWRPW.

The segment covering 18–27 has biased composition (low complexity); that stretch reads GYSDSYGSNG. The segment at 18 to 48 is disordered; the sequence is GYSDSYGSNGRMSNPNGLSKAELRKTNKPIM. The bHLH domain occupies 40-97; sequence LRKTNKPIMEKRRRARINHCLNELKSLILEAMKKDPARHTKLEKADILEMTVKHLQSV. The Orange domain maps to 116 to 149; that stretch reads FKTGFVECAEEVNRYVSQMDGIDTGVRQRLSAHL. Disordered stretches follow at residues 305 to 334 and 349 to 416; these read QLPVKNSTSPPLSPISSISSHCEESRAASP and STPP…DEPS. Over residues 311–324 the composition is skewed to low complexity; that stretch reads STSPPLSPISSISS. 2 stretches are compositionally biased toward polar residues: residues 355–378 and 385–395; these read SAETSFNTSGSLNLSAGSHDSSGC and LQQQQVSSTSG. Phosphoserine is present on residues serine 407, serine 408, and serine 411. The WRPW motif signature appears at 432-435; the sequence is WRPW.

As to quaternary structure, homodimer. Heterodimer with E(spl)mgamma-HLH and E(spl). Transcription repression requires formation of a complex with the corepressor protein Groucho. Interacts (via bHLH motif) with sisA. Interacts with da.

The protein resides in the nucleus. In terms of biological role, transcriptional repressor of genes that require a bHLH protein for their transcription. In the larval brain, required to maintain the self-renewal and identity of type II neuroblasts by regulating the expression of the transcriptional repressor erm together with other self-renewal transcriptional repressors such as klu and E(spl)mgamma-HLH. As part of its role in neuroblasts development, has been shown to be a direct target of the Notch signaling pathway, however might work also independently of N/Notch. In the developing larval and pupal brain, required for mushroom body differentiation. Involved in sex determination and SXL transcription repression when in complex with the corepressor protein Groucho. This chain is Protein deadpan (dpn), found in Drosophila melanogaster (Fruit fly).